We begin with the raw amino-acid sequence, 519 residues long: MKFGVLFSVFAAIVSALPLQEGPLNKRAYPSFEAYSNYKVDRTDLETFLDKQKEVSLYYLLQNIAYPEGQFNNGVPGTVIASPSTSNPDYYYQWTRDSAITFLTVLSELEDNNFNTTLAKAVEYYINTSYNLQRTSNPSGSFDDENHKGLGEPKFNTDGSAYTGAWGRPQNDGPALRAYAISRYLNDVNSLNEGKLVLTDSGDINFSSTEDIYKNIIKPDLEYVIGYWDSTGFDLWEENQGRHFFTSLVQQKALAYAVDIAKSFDDGDFANTLSSTASTLESYLSGSDGGFVNTDVNHIVENPDLLQQNSRQGLDSATYIGPLLTHDIGESSSTPFDVDNEYVLQSYYLLLEDNKDRYSVNSAYSAGAAIGRYPEDVYNGDGSSEGNPWFLATAYAAQVPYKLAYDAKSASNDITINKINYDFFNKYIVDLSTINSAYQSSDSVTIKSGSDEFNTVADNLVTFGDSFLQVILDHINDDGSLNEQLNRYTGYSTGAYSLTWSSGALLEAIRLRNKVKALA.

The first 27 residues, methionine 1 to arginine 27, serve as a signal peptide directing secretion. Residues asparagine 115 and asparagine 127 are each glycosylated (N-linked (GlcNAc...) asparagine). Tryptophan 166 lines the substrate pocket. N-linked (GlcNAc...) asparagine glycosylation is present at asparagine 205. The active-site Proton acceptor is aspartate 234. Catalysis depends on glutamate 237, which acts as the Proton donor.

It belongs to the glycosyl hydrolase 15 family.

The catalysed reaction is Hydrolysis of terminal (1-&gt;4)-linked alpha-D-glucose residues successively from non-reducing ends of the chains with release of beta-D-glucose.. This chain is Glucoamylase GLU1 (GLU1), found in Saccharomycopsis fibuligera (Yeast).